Consider the following 604-residue polypeptide: Hemagglutinin glycoprotein (604 aa).

Topologically, residues Met-1–Tyr-37 are intravirion. A helical membrane pass occupies residues Leu-38–Val-58. Residues Arg-59–Arg-604 are Virion surface-facing. Residues Asn-149, Asn-422, and Asn-587 are each glycosylated (N-linked (GlcNAc...) asparagine; by host).

The protein belongs to the paramyxoviruses hemagglutinin-neuraminidase family. Non-sialidase subfamily. In terms of assembly, binds canine SLAMF1 at the cell surface.

It localises to the virion membrane. Its subcellular location is the host cell membrane. Functionally, attaches the virus to cell receptors and thereby initiating infection. Binding of H protein to the receptor induces a conformational change that allows the F protein to trigger virion/cell membranes fusion. The cellular receptor might be SLAM, and may explain the lymphotropism of the virus. In Ailuropoda melanoleuca (Giant panda), this protein is Hemagglutinin glycoprotein (H).